We begin with the raw amino-acid sequence, 459 residues long: Glutamyl-tRNA reductase (459 aa).

Substrate-binding positions include 47 to 50, serine 140, 145 to 147, and glutamine 151; these read TCNR and EPQ. Cysteine 48 serves as the catalytic Nucleophile. 220–225 is an NADP(+) binding site; that stretch reads AAGEMN.

The protein belongs to the glutamyl-tRNA reductase family. In terms of assembly, homodimer.

It catalyses the reaction (S)-4-amino-5-oxopentanoate + tRNA(Glu) + NADP(+) = L-glutamyl-tRNA(Glu) + NADPH + H(+). The protein operates within porphyrin-containing compound metabolism; protoporphyrin-IX biosynthesis; 5-aminolevulinate from L-glutamyl-tRNA(Glu): step 1/2. Functionally, catalyzes the NADPH-dependent reduction of glutamyl-tRNA(Glu) to glutamate 1-semialdehyde (GSA). This chain is Glutamyl-tRNA reductase, found in Psychrobacter arcticus (strain DSM 17307 / VKM B-2377 / 273-4).